The chain runs to 290 residues: Small ribosomal subunit biogenesis GTPase RsgA (290 aa).

Residues 63-220 (KNELIRPPIA…IADTPGFSNL (158 aa)) enclose the CP-type G domain. Residues 112–115 (NKFD) and 162–170 (GPSGVGKST) each bind GTP. Zn(2+) contacts are provided by C244, C249, H251, and C257.

This sequence belongs to the TRAFAC class YlqF/YawG GTPase family. RsgA subfamily. In terms of assembly, monomer. Associates with 30S ribosomal subunit, binds 16S rRNA. The cofactor is Zn(2+).

The protein localises to the cytoplasm. In terms of biological role, one of several proteins that assist in the late maturation steps of the functional core of the 30S ribosomal subunit. Helps release RbfA from mature subunits. May play a role in the assembly of ribosomal proteins into the subunit. Circularly permuted GTPase that catalyzes slow GTP hydrolysis, GTPase activity is stimulated by the 30S ribosomal subunit. The polypeptide is Small ribosomal subunit biogenesis GTPase RsgA (Carboxydothermus hydrogenoformans (strain ATCC BAA-161 / DSM 6008 / Z-2901)).